Consider the following 161-residue polypeptide: Methylated-DNA--protein-cysteine methyltransferase (161 aa).

Residue Cys128 is the Nucleophile; methyl group acceptor of the active site.

It belongs to the MGMT family.

It is found in the cytoplasm. It carries out the reaction a 6-O-methyl-2'-deoxyguanosine in DNA + L-cysteinyl-[protein] = S-methyl-L-cysteinyl-[protein] + a 2'-deoxyguanosine in DNA. It catalyses the reaction a 4-O-methyl-thymidine in DNA + L-cysteinyl-[protein] = a thymidine in DNA + S-methyl-L-cysteinyl-[protein]. Functionally, involved in the cellular defense against the biological effects of O6-methylguanine (O6-MeG) and O4-methylthymine (O4-MeT) in DNA. Repairs the methylated nucleobase in DNA by stoichiometrically transferring the methyl group to a cysteine residue in the enzyme. This is a suicide reaction: the enzyme is irreversibly inactivated. This chain is Methylated-DNA--protein-cysteine methyltransferase, found in Methanocaldococcus vulcanius (strain ATCC 700851 / DSM 12094 / M7) (Methanococcus vulcanius).